We begin with the raw amino-acid sequence, 287 residues long: Protease HtpX (287 aa).

Transmembrane regions (helical) follow at residues 4 to 24 (IMLF…VLNI) and 36 to 56 (LSGL…ISLM). Residue H143 coordinates Zn(2+). E144 is an active-site residue. A Zn(2+)-binding site is contributed by H147. A run of 2 helical transmembrane segments spans residues 158–178 (LMQG…ANIV) and 192–212 (MVYF…ASFI). A Zn(2+)-binding site is contributed by E221.

This sequence belongs to the peptidase M48B family. Requires Zn(2+) as cofactor.

The protein resides in the cell inner membrane. The chain is Protease HtpX from Vibrio parahaemolyticus serotype O3:K6 (strain RIMD 2210633).